The following is a 7158-amino-acid chain: Twitchin (7158 aa).

Ig-like domains lie at 5–97 (PRFT…INLN) and 111–204 (PSFV…LALN). 2 disulfide bridges follow: Cys25-Cys81 and Cys132-Cys188. 4 disordered regions span residues 204–381 (NFEE…PIVL), 473–639 (EEEL…TKLR), 658–732 (KKVK…DSMA), and 763–955 (EVKE…IDMR). A compositionally biased stretch (low complexity) spans 220-238 (TASPRPSSRGPGSRPSSPK). Composition is skewed to basic and acidic residues over residues 242–259 (KSREGTPKRTLKPREGSP) and 279–291 (ESRRSSRTDKMEV). 2 stretches are compositionally biased toward low complexity: residues 319–340 (SPSTRKSPSRKSASPTPSRKGS) and 347–368 (SGTTGASASATSATSGGSASSD). In terms of domain architecture, Ig-like 3 spans 377–466 (PPIVLEASRS…GEGQSSAMVK (90 aa)). Basic residues predominate over residues 504–513 (RVARRSKSKS). A compositionally biased stretch (low complexity) spans 514 to 523 (KSPAPQAKKS). 2 stretches are compositionally biased toward basic and acidic residues: residues 529 to 540 (GRQEASEVEHKR) and 601 to 618 (KTDSPPKQDDMFSRDTLL). Over residues 620-630 (KTTTSTKNESS) the composition is skewed to low complexity. Residues 718-764 (VKSGAGGLEKSDSMASLKKLDLKKGKIDDNSDGAFKVQLKKVVKKEV) form a Kelch 1 repeat. 4 stretches are compositionally biased toward basic and acidic residues: residues 763-813 (EVKE…DKPK), 837-850 (KEVEEKSTSEELKA), 885-897 (KAHDDTNELEGIK), and 917-955 (SESRRGSVFGELRRGSRAPRDSADNSRRDSIRRSSIDMR). One can recognise an Ig-like 4 domain in the interval 980–1072 (PKIVEVPENV…DSADVKLLVT (93 aa)). The segment at 1088–1118 (SQAGFQKDGEGGGAGGGGGEKKPMTEAERRQ) is disordered. The span at 1106 to 1118 (GEKKPMTEAERRQ) shows a compositional bias: basic and acidic residues. Ig-like domains are found at residues 1122–1213 (PGKK…AQLT), 1217–1306 (PPMK…SKVQ), and 1312–1398 (PRHT…AQLI). Cys1150 and Cys1201 form a disulfide bridge. 8 Fibronectin type-III domains span residues 1598–1690 (PKGP…AKNP), 1696–1791 (KPKN…MKAK), 1891–1988 (PPKG…IKDP), 1994–2087 (KPGR…AKPK), 2189–2282 (PNGP…AKNP), 2288–2383 (KTGT…AKPR), 2483–2576 (PLGP…AKNP), and 2579–2675 (VPGK…AKPR). Residues 2014 to 2058 (PPHKDGGAPIEEYIVEVRDPDTKEWKEVKRVPDTNASISGLKEGK) form a Kelch 2 repeat. The Ig-like 8 domain occupies 2086–2181 (PKFIPAWLKH…GADEEKANLT (96 aa)). The stretch at 2207 to 2253 (WKPPDDDGGEPIEYYEVEKLDTATGRWVPCAKVKDTKAHIDGLKKGQ) is one Kelch 3 repeat. Positions 2266–2287 (GASDALSTDKDTKAKNPYDEPG) are enriched in basic and acidic residues. Residues 2266-2295 (GASDALSTDKDTKAKNPYDEPGKTGTPDVV) are disordered. The stretch at 2502 to 2547 (KVPEDDGGAPIDHYEIEKMDLATGRWVPCGRSETTKTTVPNLQPGH) is one Kelch 4 repeat. In terms of domain architecture, Ig-like 9 spans 2679–2763 (PRIHREDLSD…TNINGTDSVT (85 aa)). Fibronectin type-III domains follow at residues 2775-2868 (PKGP…AKNP) and 2874-2968 (RPGR…AKPR). The Kelch 5 repeat unit spans residues 2793-2839 (WKPPEDDGGEPIEFYEIEKMNTKDGIWVPCGRSGDTHFTVDSLNKGD). Residues 2849–2901 (NSEGPSDPLETETDILAKNPFDRPDRPGRPEPTDWDSDHVDLKWDPPLSDGGA) form a disordered region. Basic and acidic residues predominate over residues 2868-2892 (PFDRPDRPGRPEPTDWDSDHVDLKW). The 91-residue stretch at 2972–3062 (PHIDRDALKN…GEDEATVKIN (91 aa)) folds into the Ig-like 10 domain. Fibronectin type-III domains lie at 3070 to 3165 (PNGP…AKDP) and 3171 to 3265 (KTNA…AKAR). The Kelch 6 repeat unit spans residues 3089 to 3134 (RAPDDDGGIPIENYVIEKYDTASGRWVPAAKVAGDKTTAVVDGLIP). Positions 3268-3358 (PPVIDRNSIQ…GTDTAEVKVT (91 aa)) constitute an Ig-like 11 domain. 2 consecutive Fibronectin type-III domains span residues 3365-3459 (SPRG…AKDP) and 3465-3559 (KPGT…AKPR). Residues 3384–3430 (WKEPEDDGGAEISHYVIEKQDAATGRWTACGESKDTNFHVDDLTQGH) form a Kelch 7 repeat. Positions 3563 to 3653 (PKINRDMFVA…GKDEHEVDVN (91 aa)) constitute an Ig-like 12 domain. 6 consecutive Fibronectin type-III domains span residues 3661 to 3753 (PEGP…AKNP), 3759 to 3853 (APTD…AKPR), 3954 to 4047 (PEGP…AKNQ), 4053 to 4146 (PVDK…TKAR), 4246 to 4340 (PEGP…AKDP), and 4346 to 4440 (KPGR…TAKP). One copy of the Kelch 8 repeat lies at 3972 to 4018 (WKPPTDNGGTDVLHYIVEKMDTSRGTWQEVGTFPDCTAKVNKLVPGK). Kelch repeat units follow at residues 4265-4310 (KPPK…LTEG) and 4365-4410 (DPPR…RVQK). In terms of domain architecture, Ig-like 13 spans 4445–4531 (PKFDLDLDGK…GEAEANIKIT (87 aa)). Fibronectin type-III domains are found at residues 4538–4631 (APEN…IKDP), 4637–4733 (APST…CRPY), 4739–4834 (APDA…IEEQ), 4936–5028 (PTGP…AKNP), 5034–5129 (APGQ…ADNA), 5231–5326 (SPQH…VAKY), 5333–5427 (QPEA…LKSR), and 5430–5528 (PPGP…IQES). Residues 4557-4602 (DAPKDDGGAEIAGYKIEYQEVGSQIWDKVPGLISGTAYTVRGLEHG) form a Kelch 11 repeat. The Kelch 12 repeat unit spans residues 5287–5335 (LNYTVGGLIKDNRYRFRVRAETQYGVSEPCELADVVVAKYQFEVPNQPE). Positions 5533-5621 (PQIVVKPEDT…GSDTATANLV (89 aa)) constitute an Ig-like 14 domain. 2 consecutive Fibronectin type-III domains span residues 5723–5817 (PQGP…ARLP) and 5823–5919 (SPLN…ASGS). The Kelch 13 repeat unit spans residues 5742 to 5787 (RPPVTDGGSKITSYVVEKRDLSKDEWVTVTSNVKDMNYIVTGLFEN). 2 consecutive Ig-like domains span residues 5923–6011 (PKIV…ANLR) and 6016–6107 (PRVF…VNVT). A disulfide bridge connects residues Cys5944 and Cys5995. A Fibronectin type-III 31 domain is found at 6114–6207 (PPRFPIIENI…PTAPVLIPGD (94 aa)). In terms of domain architecture, Protein kinase spans 6261–6516 (YDIHEELGTG…IHQALEHPWL (256 aa)). Residues 6267 to 6275 (LGTGAFGVV) and Lys6290 contribute to the ATP site. Asp6382 functions as the Proton acceptor in the catalytic mechanism. The segment at 6517-6581 (TPGNAPGRDS…SIRDAFWDRS (65 aa)) is C-terminal regulatory domain (CDR). 5 Ig-like domains span residues 6585–6673 (PRFI…VFLN), 6696–6795 (PRVE…CVLT), 6863–6952 (PSFT…ATLT), 6958–7059 (PLLN…ASLV), and 7067–7149 (PPVT…KAIA).

The protein belongs to the protein kinase superfamily. CAMK Ser/Thr protein kinase family. In terms of assembly, may interact (via protein kinase and CRD domains) with mak-1 (via protein kinase domain). Requires Mg(2+) as cofactor. Phosphorylated by mak-1 on the protein kinase domain and/or CDR domain in vitro. As to expression, expressed in body wall, anal, vulval, and pharyngeal muscles (at protein level).

Its subcellular location is the cytoplasm. The protein resides in the myofibril. The protein localises to the sarcomere. It localises to the a band. The enzyme catalyses L-seryl-[protein] + ATP = O-phospho-L-seryl-[protein] + ADP + H(+). It catalyses the reaction L-threonyl-[protein] + ATP = O-phospho-L-threonyl-[protein] + ADP + H(+). Its activity is regulated as follows. Forces generated by the contraction/relaxation cycles of muscle activity separate the regulatory domain from the catalytic core, activating the enzyme. At rest, the kinase domain is in a closed conformation. The active site is occupied by the autoinhibitory region (CDR), which makes extensive contact with the catalytic site, blocking substrate binding. At low forces the regulatory tail will unravel reversibly and expose the active site to its substrates, potentially stabilized by binding of Ca/CALM. At high forces the kinase begins to unfold and the integrity of the active site is disrupted. Its function is as follows. Regulator of muscle contraction and relaxation. Senses mechanical strain that occurs during muscle activity by unfolding in clearly resolvable steps at differing forces. Plays a role in the organization of sarcomeres in body wall muscles. The polypeptide is Twitchin (Caenorhabditis elegans).